Reading from the N-terminus, the 224-residue chain is Orotidine 5'-phosphate decarboxylase (224 aa).

Residues aspartate 10, lysine 32, 59–68 (DLKLHDIPNT), threonine 115, arginine 175, glutamine 184, glycine 204, and arginine 205 each bind substrate. Residue lysine 61 is the Proton donor of the active site.

This sequence belongs to the OMP decarboxylase family. Type 1 subfamily. In terms of assembly, homodimer.

It carries out the reaction orotidine 5'-phosphate + H(+) = UMP + CO2. It functions in the pathway pyrimidine metabolism; UMP biosynthesis via de novo pathway; UMP from orotate: step 2/2. Functionally, catalyzes the decarboxylation of orotidine 5'-monophosphate (OMP) to uridine 5'-monophosphate (UMP). The sequence is that of Orotidine 5'-phosphate decarboxylase from Sphingopyxis alaskensis (strain DSM 13593 / LMG 18877 / RB2256) (Sphingomonas alaskensis).